The primary structure comprises 229 residues: Ribonuclease 3 (229 aa).

The 123-residue stretch at 5 to 127 (LNRLERKLGH…LIGAIYLDAG (123 aa)) folds into the RNase III domain. E40 contributes to the Mg(2+) binding site. D44 is an active-site residue. The Mg(2+) site is built by D113 and E116. E116 is a catalytic residue. The DRBM domain occupies 154 to 224 (DPKTRLQEFL…AAAALVALGV (71 aa)).

The protein belongs to the ribonuclease III family. Homodimer. Mg(2+) serves as cofactor.

The protein localises to the cytoplasm. It carries out the reaction Endonucleolytic cleavage to 5'-phosphomonoester.. Digests double-stranded RNA. Involved in the processing of primary rRNA transcript to yield the immediate precursors to the large and small rRNAs (23S and 16S). Processes some mRNAs, and tRNAs when they are encoded in the rRNA operon. Processes pre-crRNA and tracrRNA of type II CRISPR loci if present in the organism. The sequence is that of Ribonuclease 3 from Azotobacter vinelandii (strain DJ / ATCC BAA-1303).